We begin with the raw amino-acid sequence, 185 residues long: Lysozyme g (185 aa).

Residue glutamate 73 is part of the active site.

The protein belongs to the glycosyl hydrolase 23 family.

It carries out the reaction Hydrolysis of (1-&gt;4)-beta-linkages between N-acetylmuramic acid and N-acetyl-D-glucosamine residues in a peptidoglycan and between N-acetyl-D-glucosamine residues in chitodextrins.. This is Lysozyme g from Cyprinus carpio (Common carp).